We begin with the raw amino-acid sequence, 574 residues long: Sulfate adenylyltransferase (574 aa).

The interval 1–170 (MANPPHGGVL…VEAIDRLEHY (170 aa)) is N-terminal. Positions 171–395 (DYVGLRYTPA…LRESHPPRNQ (225 aa)) are catalytic. Gln198 contributes to the sulfate binding site. ATP contacts are provided by residues 198–201 (QTRN) and 292–295 (GRDH). Residues Thr199, Arg200, and Asn201 contribute to the active site. Arg200 contributes to the sulfate binding site. Ala296 contacts sulfate. Met334 contributes to the ATP binding site. Positions 396-574 (QGFTVFLTGY…LESQGLLTQL (179 aa)) are allosteric regulation domain; adenylyl-sulfate kinase-like. Residues 435–438 (ETVR), Arg452, 478–479 (IA), and Arg516 contribute to the 3'-phosphoadenylyl sulfate site.

This sequence in the N-terminal section; belongs to the sulfate adenylyltransferase family. It in the C-terminal section; belongs to the APS kinase family. In terms of assembly, homohexamer. Dimer of trimers.

It is found in the cytoplasm. It carries out the reaction sulfate + ATP + H(+) = adenosine 5'-phosphosulfate + diphosphate. It functions in the pathway sulfur metabolism; hydrogen sulfide biosynthesis; sulfite from sulfate: step 1/3. With respect to regulation, allosterically inhibited by 3'-phosphoadenosine 5'-phosphosulfate (PAPS). Its function is as follows. Catalyzes the first intracellular reaction of sulfate assimilation, forming adenosine-5'-phosphosulfate (APS) from inorganic sulfate and ATP. Plays an important role in sulfate activation as a component of the biosynthesis pathway of sulfur-containing amino acids. In Phaeosphaeria nodorum (strain SN15 / ATCC MYA-4574 / FGSC 10173) (Glume blotch fungus), this protein is Sulfate adenylyltransferase.